Here is a 452-residue protein sequence, read N- to C-terminus: tRNA modification GTPase MnmE (452 aa).

Positions 25, 81, and 120 each coordinate (6S)-5-formyl-5,6,7,8-tetrahydrofolate. Residues 216 to 375 (GITVVIAGEP…LKNHLKNTAG (160 aa)) enclose the TrmE-type G domain. Position 226 (N226) interacts with K(+). Residues 226–231 (NVGKSS), 245–251 (TDIAGTT), and 270–273 (DTAG) each bind GTP. Position 230 (S230) interacts with Mg(2+). Positions 245, 247, and 250 each coordinate K(+). A Mg(2+)-binding site is contributed by T251. Residue K452 participates in (6S)-5-formyl-5,6,7,8-tetrahydrofolate binding.

The protein belongs to the TRAFAC class TrmE-Era-EngA-EngB-Septin-like GTPase superfamily. TrmE GTPase family. Homodimer. Heterotetramer of two MnmE and two MnmG subunits. K(+) serves as cofactor.

The protein resides in the cytoplasm. Its function is as follows. Exhibits a very high intrinsic GTPase hydrolysis rate. Involved in the addition of a carboxymethylaminomethyl (cmnm) group at the wobble position (U34) of certain tRNAs, forming tRNA-cmnm(5)s(2)U34. The polypeptide is tRNA modification GTPase MnmE (Coxiella burnetii (strain Dugway 5J108-111)).